The sequence spans 114 residues: Nucleoid-associated protein slr1847 (114 aa).

It belongs to the YbaB/EbfC family. In terms of assembly, homodimer.

It localises to the cytoplasm. It is found in the nucleoid. In terms of biological role, binds to DNA and alters its conformation. May be involved in regulation of gene expression, nucleoid organization and DNA protection. In Synechocystis sp. (strain ATCC 27184 / PCC 6803 / Kazusa), this protein is Nucleoid-associated protein slr1847.